A 452-amino-acid chain; its full sequence is Adenylosuccinate synthetase (452 aa).

GTP contacts are provided by residues 40-46 (GDEGKGK) and 68-70 (GHT). The active-site Proton acceptor is the aspartate 41. Mg(2+) contacts are provided by aspartate 41 and glycine 68. IMP is bound by residues 41–44 (DEGK), 66–69 (NAGH), threonine 158, arginine 172, asparagine 250, threonine 265, and arginine 329. Catalysis depends on histidine 69, which acts as the Proton donor. A substrate-binding site is contributed by 325 to 331 (VTTKRKR). Residues arginine 331, 357-359 (KLD), and 440-442 (GVG) contribute to the GTP site.

The protein belongs to the adenylosuccinate synthetase family. In terms of assembly, homodimer. It depends on Mg(2+) as a cofactor.

It localises to the cytoplasm. The enzyme catalyses IMP + L-aspartate + GTP = N(6)-(1,2-dicarboxyethyl)-AMP + GDP + phosphate + 2 H(+). It functions in the pathway purine metabolism; AMP biosynthesis via de novo pathway; AMP from IMP: step 1/2. Plays an important role in the de novo pathway and in the salvage pathway of purine nucleotide biosynthesis. Catalyzes the first committed step in the biosynthesis of AMP from IMP. The chain is Adenylosuccinate synthetase from Drosophila grimshawi (Hawaiian fruit fly).